A 212-amino-acid chain; its full sequence is Probable GTP-binding protein EngB (212 aa).

The region spanning 27–211 (GPPEIAFAGR…QAAIVLAANG (185 aa)) is the EngB-type G domain. GTP is bound by residues 35–42 (GRSNVGKS), 62–66 (GRTQE), 89–92 (DMPG), 156–159 (TKTD), and 190–192 (TSS). Mg(2+) is bound by residues S42 and T64.

This sequence belongs to the TRAFAC class TrmE-Era-EngA-EngB-Septin-like GTPase superfamily. EngB GTPase family. The cofactor is Mg(2+).

Functionally, necessary for normal cell division and for the maintenance of normal septation. In Mesorhizobium japonicum (strain LMG 29417 / CECT 9101 / MAFF 303099) (Mesorhizobium loti (strain MAFF 303099)), this protein is Probable GTP-binding protein EngB.